The sequence spans 388 residues: S-adenosylmethionine synthase (388 aa).

His16 serves as a coordination point for ATP. Residue Asp18 participates in Mg(2+) binding. Glu44 contributes to the K(+) binding site. Residues Glu57 and Gln100 each contribute to the L-methionine site. The flexible loop stretch occupies residues 100-110; the sequence is QSPEIAQGVDR. Residues 165-167, Asp240, 246-247, Ala263, and Lys267 contribute to the ATP site; these read DAK and RK. Asp240 contributes to the L-methionine binding site. Position 271 (Lys271) interacts with L-methionine.

The protein belongs to the AdoMet synthase family. In terms of assembly, homotetramer; dimer of dimers. The cofactor is Mg(2+). It depends on K(+) as a cofactor.

The protein resides in the cytoplasm. It carries out the reaction L-methionine + ATP + H2O = S-adenosyl-L-methionine + phosphate + diphosphate. Its pathway is amino-acid biosynthesis; S-adenosyl-L-methionine biosynthesis; S-adenosyl-L-methionine from L-methionine: step 1/1. Its function is as follows. Catalyzes the formation of S-adenosylmethionine (AdoMet) from methionine and ATP. The overall synthetic reaction is composed of two sequential steps, AdoMet formation and the subsequent tripolyphosphate hydrolysis which occurs prior to release of AdoMet from the enzyme. The sequence is that of S-adenosylmethionine synthase from Acinetobacter baylyi (strain ATCC 33305 / BD413 / ADP1).